Reading from the N-terminus, the 522-residue chain is Bifunctional purine biosynthesis protein PurH (522 aa).

The region spanning 1–145 (MKPIARALIS…KNHAAVTVIV (145 aa)) is the MGS-like domain.

It belongs to the PurH family.

It carries out the reaction (6R)-10-formyltetrahydrofolate + 5-amino-1-(5-phospho-beta-D-ribosyl)imidazole-4-carboxamide = 5-formamido-1-(5-phospho-D-ribosyl)imidazole-4-carboxamide + (6S)-5,6,7,8-tetrahydrofolate. The catalysed reaction is IMP + H2O = 5-formamido-1-(5-phospho-D-ribosyl)imidazole-4-carboxamide. Its pathway is purine metabolism; IMP biosynthesis via de novo pathway; 5-formamido-1-(5-phospho-D-ribosyl)imidazole-4-carboxamide from 5-amino-1-(5-phospho-D-ribosyl)imidazole-4-carboxamide (10-formyl THF route): step 1/1. It participates in purine metabolism; IMP biosynthesis via de novo pathway; IMP from 5-formamido-1-(5-phospho-D-ribosyl)imidazole-4-carboxamide: step 1/1. The chain is Bifunctional purine biosynthesis protein PurH from Nitrosococcus oceani (strain ATCC 19707 / BCRC 17464 / JCM 30415 / NCIMB 11848 / C-107).